A 453-amino-acid polypeptide reads, in one-letter code: Ankyrin repeat and SOCS box protein 16 (453 aa).

ANK repeat units lie at residues 56–85 (CRDP…AANM), 110–139 (KQTA…ELDA), 142–171 (GGRA…KANV), 175–204 (EGTT…TVNL), 209–238 (SQET…DVGL), 242–279 (QGET…DARA), and 283–312 (KRHT…RAEV). In terms of domain architecture, SOCS box spans 398–450 (YSSALCMVNQPRQLQHLARLAVRARLGSRCRQGATRLPLPPLLRDYLLLRVEG).

It belongs to the ankyrin SOCS box (ASB) family.

Its pathway is protein modification; protein ubiquitination. Functionally, may be a substrate-recognition component of a SCF-like ECS (Elongin-Cullin-SOCS-box protein) E3 ubiquitin-protein ligase complex which mediates the ubiquitination and subsequent proteasomal degradation of target proteins. This Homo sapiens (Human) protein is Ankyrin repeat and SOCS box protein 16 (ASB16).